Reading from the N-terminus, the 495-residue chain is Pre-glycoprotein polyprotein GP complex (495 aa).

Residue Gly-2 is the site of N-myristoyl glycine; by host attachment. At 2–17 (GQFISFMQEIPIFLQE) the chain is on the extracellular side. The helical transmembrane segment at 18–33 (ALNIALVAVSLICIVK) threads the bilayer. Residues 34–58 (GLVNLYRCGLFQLMVFLVLAGRSCS) are Cytoplasmic-facing. Cys-57 serves as a coordination point for Zn(2+). The Extracellular portion of the chain corresponds to 59–434 (EETFKIGMHT…QGRTPITLVD (376 aa)). 4 cysteine pairs are disulfide-bonded: Cys-92–Cys-236, Cys-281–Cys-294, Cys-303–Cys-312, and Cys-366–Cys-387. Residues Asn-95 and Asn-188 are each glycosylated (N-linked (GlcNAc...) asparagine; by host). Asn-367, Asn-375, Asn-392, and Asn-397 each carry an N-linked (GlcNAc...) asparagine; by host glycan. The helical transmembrane segment at 435–455 (ICFWSTVFFTSTLFLHLIGFP) threads the bilayer. Over 456–495 (THEHIRGEGCPLPHRLNSMGGCRCGKYLPLKKPTIWHRRH) the chain is Cytoplasmic. Zn(2+) is bound by residues His-457, His-459, Cys-465, His-469, Cys-477, Cys-479, and His-495.

Belongs to the arenaviridae GPC protein family. Interacts with glycoprotein G2. Part of the GP complex (GP-C) together with glycoprotein G1 and glycoprotein G2. The GP-complex interacts with protein Z, which interacts with ribonucleocapsid; these interactions may induce virion budding. As to quaternary structure, homotrimer; disulfide-linked. In pre-fusion state, G1 homotrimers bind G2 homotrimers via ionic interactions. Part of the GP complex (GP-C) together with glycoprotein G2 and the stable signal peptide. The GP-complex interacts with protein Z, which interacts with ribonucleocapsid; these interactions may induce virion budding. In terms of assembly, homotrimer. Interacts with the stable signal peptide. In pre-fusion state, G2 homotrimers bind G1 homotrimers via ionic interactions. Part of the GP complex (GP-C) together with glycoprotein G1 and the stable signal peptide. Acidification in the endosome triggers rearrangements, which ultimately leads to a 6 helix bundle formed by the two heptad repeat domains (HR1 and HR2) in post-fusion state. The GP-complex interacts with protein Z, which interacts with ribonucleocapsid; these interactions may induce virion budding. Specific enzymatic cleavages in vivo yield mature proteins. GP-C polyprotein is cleaved in the endoplasmic reticulum by the host protease MBTPS1. Only cleaved glycoprotein is incorporated into virions. Post-translationally, the SSP remains stably associated with the GP complex following cleavage by signal peptidase and plays crucial roles in the trafficking of GP through the secretory pathway. In terms of processing, myristoylation is necessary for GP2-mediated fusion activity.

It localises to the virion membrane. The protein localises to the host endoplasmic reticulum membrane. Its subcellular location is the host Golgi apparatus membrane. It is found in the host cell membrane. Functions as a cleaved signal peptide that is retained as the third component of the GP complex (GP-C). Helps to stabilize the spike complex in its native conformation. The SSP is required for efficient glycoprotein expression, post-translational maturation cleavage of G1 and G2, glycoprotein transport to the cell surface plasma membrane, formation of infectious virus particles, and acid pH-dependent glycoprotein-mediated cell fusion. Functionally, forms the virion spikes together with glycoprotein G2. The glycoprotein spike trimers are connected to the underlying matrix. Interacts with the host receptor leading to virus endocytosis. Its function is as follows. Forms the virion spikes together with glycoprotein G1. The glycoprotein spike trimers are connected to the underlying matrix. Class I viral fusion protein that directs fusion of viral and host endosomal membranes, leading to delivery of the nucleocapsid into the cytoplasm. Membrane fusion is mediated by irreversible conformational changes induced by acidification. The polypeptide is Pre-glycoprotein polyprotein GP complex (Tacaribe virus (strain Franze-Fernandez) (TCRV)).